A 586-amino-acid chain; its full sequence is Eukaryotic translation initiation factor 3 subunit D (586 aa).

Positions 102-176 (SAKRTFGRGG…DKPQRTREPS (75 aa)) are disordered. Residues 162-174 (GWKDYDKPQRTRE) show a composition bias toward basic and acidic residues. An RNA gate region spans residues 301 to 315 (SLDLVTVNENAADAP). Residues 567 to 586 (EEEEEVAAEEQEAAEEEAEE) are disordered.

Belongs to the eIF-3 subunit D family. In terms of assembly, component of the eukaryotic translation initiation factor 3 (eIF-3) complex.

It localises to the cytoplasm. Functionally, mRNA cap-binding component of the eukaryotic translation initiation factor 3 (eIF-3) complex, which is involved in protein synthesis of a specialized repertoire of mRNAs and, together with other initiation factors, stimulates binding of mRNA and methionyl-tRNAi to the 40S ribosome. The eIF-3 complex specifically targets and initiates translation of a subset of mRNAs involved in cell proliferation. In the eIF-3 complex, eif3d specifically recognizes and binds the 7-methylguanosine cap of a subset of mRNAs. This Aspergillus niger (strain ATCC MYA-4892 / CBS 513.88 / FGSC A1513) protein is Eukaryotic translation initiation factor 3 subunit D.